Here is a 1723-residue protein sequence, read N- to C-terminus: Lys-gingipain HG66 (1723 aa).

A signal peptide spans 1–24 (MRKLLLLIAASLLGVGLYAQNAKI). Positions 25–228 (KLDAPTTRTT…ETAYKQLFNR (204 aa)) are excised as a propeptide. D313, D337, D339, F341, and E343 together coordinate Ca(2+). The active-site Proton donor is H444. The active-site Nucleophile is C477. The Ca(2+) site is built by F482 and E491. Positions 965–985 (DAPNGTPNPNPNPNPGTTTLS) are disordered. S987, E989, D1000, D1002, D1004, H1006, S1021, G1023, N1042, D1145, and E1146 together coordinate Ca(2+).

Belongs to the peptidase C25 family. In terms of processing, proteolytically cleaved into a catalytic subunit and three adhesins. Arg-gingipain is involved in this post-translational processing.

The protein resides in the secreted. The catalysed reaction is Endopeptidase with strict specificity for lysyl bonds.. Functionally, cysteine proteinase with a strong preference for substrates with Lys in the P1 position. Hydrolyzes bovine hemoglobin, bovine serum albumin, casein, human placental type I collagen and human IgA and IgG. Disrupts the functions of polymorphonuclear leukocytes. May act as a virulence factor in the development of peridontal disease. Involved in the coaggregation of P.gingivalis with other oral bacteria. This is Lys-gingipain HG66 from Porphyromonas gingivalis (Bacteroides gingivalis).